A 531-amino-acid polypeptide reads, in one-letter code: Splicing factor ESS-2 (531 aa).

2 disordered regions span residues 104-163 and 453-531; these read RTPI…RKKK and PFAS…GDFF. Polar residues predominate over residues 105–114; that stretch reads TPITTRSTTE. Low complexity-rich tracts occupy residues 125-136 and 464-477; these read TPGPSSASTSSA and SRPS…TPGS. Over residues 480–498 the composition is skewed to polar residues; that stretch reads SRGSTTPGSSWSQGAQTPG.

The protein belongs to the ESS2 family.

Its subcellular location is the nucleus. Regulates pre-mRNA splicing. The sequence is that of Splicing factor ESS-2 (ess-2) from Caenorhabditis elegans.